The chain runs to 305 residues: tRNA uridine(34) hydroxylase (305 aa).

One can recognise a Rhodanese domain in the interval 130 to 228; the sequence is DDPDTLVIDT…YLGEIPEQES (99 aa). Catalysis depends on C188, which acts as the Cysteine persulfide intermediate.

Belongs to the TrhO family.

The catalysed reaction is uridine(34) in tRNA + AH2 + O2 = 5-hydroxyuridine(34) in tRNA + A + H2O. Its function is as follows. Catalyzes oxygen-dependent 5-hydroxyuridine (ho5U) modification at position 34 in tRNAs. The protein is tRNA uridine(34) hydroxylase of Synechococcus sp. (strain CC9902).